The primary structure comprises 593 residues: Arginine--tRNA ligase (593 aa).

The short motif at 123–133 (PNVAKPMHVGH) is the 'HIGH' region element.

Belongs to the class-I aminoacyl-tRNA synthetase family. Monomer.

It is found in the cytoplasm. The catalysed reaction is tRNA(Arg) + L-arginine + ATP = L-arginyl-tRNA(Arg) + AMP + diphosphate. This is Arginine--tRNA ligase from Phenylobacterium zucineum (strain HLK1).